The chain runs to 226 residues: Acyl-protein thioesterase 1 homolog 1 (226 aa).

Catalysis depends on charge relay system residues S121, D174, and H206.

It belongs to the AB hydrolase superfamily. AB hydrolase 2 family.

The protein resides in the cytoplasm. Its subcellular location is the nucleus. It catalyses the reaction S-hexadecanoyl-L-cysteinyl-[protein] + H2O = L-cysteinyl-[protein] + hexadecanoate + H(+). Hydrolyzes fatty acids from S-acylated cysteine residues in proteins with a strong preference for palmitoylated G-alpha proteins over other acyl substrates. Mediates the deacylation of G-alpha proteins such as GPA1 in vivo, but has weak or no activity toward palmitoylated Ras proteins. Has weak lysophospholipase activity in vitro; however such activity may not exist in vivo. The protein is Acyl-protein thioesterase 1 homolog 1 of Dictyostelium discoideum (Social amoeba).